An 876-amino-acid polypeptide reads, in one-letter code: Valine--tRNA ligase (876 aa).

A 'HIGH' region motif is present at residues 44–54 (PNVTGKLHLGH). The 'KMSKS' region motif lies at 520–524 (KMSKS). Lys523 is an ATP binding site. Residues 806–876 (EGLIDMDKEI…VKLRINQLKA (71 aa)) are a coiled coil.

This sequence belongs to the class-I aminoacyl-tRNA synthetase family. ValS type 1 subfamily. In terms of assembly, monomer.

Its subcellular location is the cytoplasm. It carries out the reaction tRNA(Val) + L-valine + ATP = L-valyl-tRNA(Val) + AMP + diphosphate. Functionally, catalyzes the attachment of valine to tRNA(Val). As ValRS can inadvertently accommodate and process structurally similar amino acids such as threonine, to avoid such errors, it has a 'posttransfer' editing activity that hydrolyzes mischarged Thr-tRNA(Val) in a tRNA-dependent manner. This Staphylococcus saprophyticus subsp. saprophyticus (strain ATCC 15305 / DSM 20229 / NCIMB 8711 / NCTC 7292 / S-41) protein is Valine--tRNA ligase.